Reading from the N-terminus, the 82-residue chain is Ice-structuring protein A (82 aa).

Residues 1–23 (MALSLFTVGQLIFLFWTMRITEA) form the signal peptide. The propeptide at 24–44 (SPDPAAKAAPAAAAAPAAAAP) is removed by a dipeptidylpeptidase. Residue arginine 81 is modified to Arginine amide.

This sequence belongs to the type-I AFP family. Detected in liver and in blood serum (at protein level).

Its subcellular location is the secreted. Its function is as follows. Contributes to protect fish blood from freezing at subzero sea water temperatures. Lowers the blood freezing point. Binds to nascent ice crystals and prevents further growth. This chain is Ice-structuring protein A, found in Pseudopleuronectes americanus (Winter flounder).